A 202-amino-acid polypeptide reads, in one-letter code: MSTLARTAHVTRQTSESTIDLQLDLDGTGASEISTSVPFYDHMLTAFAKHSLTDLRVTATGDTHIDVHHTVEDVGIVLGQAIREALGDKSGIARFGDALVPLDEALVQSVVDISGRPFLVHSGEPAGFEMHLIGGHFTGSMVRHVFEAITFHAGLTVHVTVLGGRDPHHIAEAEFKSFARAFRQAKELDPRVSGIPSTKGAL.

Belongs to the imidazoleglycerol-phosphate dehydratase family.

The protein localises to the cytoplasm. The catalysed reaction is D-erythro-1-(imidazol-4-yl)glycerol 3-phosphate = 3-(imidazol-4-yl)-2-oxopropyl phosphate + H2O. The protein operates within amino-acid biosynthesis; L-histidine biosynthesis; L-histidine from 5-phospho-alpha-D-ribose 1-diphosphate: step 6/9. In Clavibacter michiganensis subsp. michiganensis (strain NCPPB 382), this protein is Imidazoleglycerol-phosphate dehydratase.